The following is a 287-amino-acid chain: Ribosomal RNA small subunit methyltransferase A (287 aa).

Positions 28, 30, 55, 77, 103, and 123 each coordinate S-adenosyl-L-methionine.

Belongs to the class I-like SAM-binding methyltransferase superfamily. rRNA adenine N(6)-methyltransferase family. RsmA subfamily.

The protein localises to the cytoplasm. It carries out the reaction adenosine(1518)/adenosine(1519) in 16S rRNA + 4 S-adenosyl-L-methionine = N(6)-dimethyladenosine(1518)/N(6)-dimethyladenosine(1519) in 16S rRNA + 4 S-adenosyl-L-homocysteine + 4 H(+). Specifically dimethylates two adjacent adenosines (A1518 and A1519) in the loop of a conserved hairpin near the 3'-end of 16S rRNA in the 30S particle. May play a critical role in biogenesis of 30S subunits. This Rhodopseudomonas palustris (strain BisA53) protein is Ribosomal RNA small subunit methyltransferase A.